A 99-amino-acid polypeptide reads, in one-letter code: MFAIIQSGGKQYRVQEGDVVRVETLKGEAGDKLELKPILVGGNDTLLGDEAARFTVNAEIVEHGLGKKIYIRKYKSGIQYRRRNGHRQPYTAIRITSIA.

It belongs to the bacterial ribosomal protein bL21 family. Part of the 50S ribosomal subunit. Contacts protein L20.

Functionally, this protein binds to 23S rRNA in the presence of protein L20. The polypeptide is Large ribosomal subunit protein bL21 (Deinococcus geothermalis (strain DSM 11300 / CIP 105573 / AG-3a)).